Reading from the N-terminus, the 35-residue chain is Photosystem II reaction center protein M (35 aa).

Residues 7-27 traverse the membrane as a helical segment; it reads GFIASILFVLVPTVFLLILFI.

The protein belongs to the PsbM family. PSII is composed of 1 copy each of membrane proteins PsbA, PsbB, PsbC, PsbD, PsbE, PsbF, PsbH, PsbI, PsbJ, PsbK, PsbL, PsbM, PsbT, PsbX, PsbY, PsbZ, Psb30/Ycf12, peripheral proteins PsbO, CyanoQ (PsbQ), PsbU, PsbV and a large number of cofactors. It forms dimeric complexes.

The protein resides in the cellular thylakoid membrane. In terms of biological role, one of the components of the core complex of photosystem II (PSII). PSII is a light-driven water:plastoquinone oxidoreductase that uses light energy to abstract electrons from H(2)O, generating O(2) and a proton gradient subsequently used for ATP formation. It consists of a core antenna complex that captures photons, and an electron transfer chain that converts photonic excitation into a charge separation. This subunit is found at the monomer-monomer interface. The chain is Photosystem II reaction center protein M from Microcystis aeruginosa (strain NIES-843 / IAM M-2473).